Here is a 386-residue protein sequence, read N- to C-terminus: MSELIQNVKTSFEQVLGYAPSHIIQAPGRVNLIGEHTDYNDGFVLPCAINYQTVVAAAKREDNIVRVVSVDYGNAVDEFDITQAITFQQDKMWANYIRGVVKCLLARGYSFTGADISVSGNVPQGAGLSSSAALEVVIGQTFKVLFNLEISQAEIALNGQQAENEFVGCNCGIMDQMISAEGRENHAMLLDCRSLETESVSMPEEMAVVIINSNKKRGLVDSEYNTRRQQCEEAARIFGVKALRDVTIEQFNEKVAELDEMVAKRARHVITENDRTVEAAQALRAHDMKRMGELMAESHASMRDDFEITVKEIDTLVEIVKEVIGDQGGVRMTGGGFGGCIVALVPPALVDDVKATVAAKYQAATGLKESIYVCQAKDGAGLVEVL.

35 to 38 (EHTD) serves as a coordination point for substrate. ATP-binding positions include Ser-69 and 125–131 (GAGLSSS). Mg(2+) is bound by residues Ser-131 and Glu-163. Asp-175 functions as the Proton acceptor in the catalytic mechanism. Tyr-224 lines the substrate pocket.

This sequence belongs to the GHMP kinase family. GalK subfamily.

The protein resides in the cytoplasm. It catalyses the reaction alpha-D-galactose + ATP = alpha-D-galactose 1-phosphate + ADP + H(+). The protein operates within carbohydrate metabolism; galactose metabolism. Catalyzes the transfer of the gamma-phosphate of ATP to D-galactose to form alpha-D-galactose-1-phosphate (Gal-1-P). The polypeptide is Galactokinase (Vibrio vulnificus (strain CMCP6)).